A 341-amino-acid polypeptide reads, in one-letter code: L-threonine 3-dehydrogenase (341 aa).

Cys-38 is a Zn(2+) binding site. Residues Thr-40 and His-43 each act as charge relay system in the active site. Residues His-63, Glu-64, Cys-93, Cys-96, Cys-99, and Cys-107 each coordinate Zn(2+). Residues Ile-175, Asp-195, Arg-200, 262–264 (LGI), and 286–287 (IY) contribute to the NAD(+) site.

It belongs to the zinc-containing alcohol dehydrogenase family. In terms of assembly, homotetramer. The cofactor is Zn(2+).

The protein resides in the cytoplasm. It catalyses the reaction L-threonine + NAD(+) = (2S)-2-amino-3-oxobutanoate + NADH + H(+). The protein operates within amino-acid degradation; L-threonine degradation via oxydo-reductase pathway; glycine from L-threonine: step 1/2. Functionally, catalyzes the NAD(+)-dependent oxidation of L-threonine to 2-amino-3-ketobutyrate. This chain is L-threonine 3-dehydrogenase, found in Proteus mirabilis (strain HI4320).